The following is a 158-amino-acid chain: SsrA-binding protein (158 aa).

Residues 133–158 (QLHDKRETEKKRDWNKEKGRLLRDKH) are disordered.

Belongs to the SmpB family.

The protein localises to the cytoplasm. Functionally, required for rescue of stalled ribosomes mediated by trans-translation. Binds to transfer-messenger RNA (tmRNA), required for stable association of tmRNA with ribosomes. tmRNA and SmpB together mimic tRNA shape, replacing the anticodon stem-loop with SmpB. tmRNA is encoded by the ssrA gene; the 2 termini fold to resemble tRNA(Ala) and it encodes a 'tag peptide', a short internal open reading frame. During trans-translation Ala-aminoacylated tmRNA acts like a tRNA, entering the A-site of stalled ribosomes, displacing the stalled mRNA. The ribosome then switches to translate the ORF on the tmRNA; the nascent peptide is terminated with the 'tag peptide' encoded by the tmRNA and targeted for degradation. The ribosome is freed to recommence translation, which seems to be the essential function of trans-translation. This Beijerinckia indica subsp. indica (strain ATCC 9039 / DSM 1715 / NCIMB 8712) protein is SsrA-binding protein.